We begin with the raw amino-acid sequence, 791 residues long: ABC multidrug transporter mdr2 (791 aa).

N-linked (GlcNAc...) asparagine glycosylation is present at Asn147. A run of 2 helical transmembrane segments spans residues 182–202 (ALAF…PFSI) and 220–240 (LFGL…TLGA). The ABC transmembrane type-1 domain occupies 182–471 (ALAFLFLLVS…LSSFYSELMK (290 aa)). Residue Asn303 is glycosylated (N-linked (GlcNAc...) asparagine). The next 2 helical transmembrane spans lie at 307 to 324 (GLRA…MAYV) and 326 to 346 (LKLS…AFFY). N-linked (GlcNAc...) asparagine glycosylation is found at Asn352 and Asn421. The next 2 membrane-spanning stretches (helical) occupy residues 422 to 442 (MTIL…AITI) and 445 to 465 (LTSF…LSSF). The 238-residue stretch at 504-741 (IRFENVTFSY…PDGAFTKLME (238 aa)) folds into the ABC transporter domain. A glycan (N-linked (GlcNAc...) asparagine) is linked at Asn508. 539 to 546 (GPSGGGKS) provides a ligand contact to ATP. A glycan (N-linked (GlcNAc...) asparagine) is linked at Asn692. Positions 754 to 769 (ANTPANPVAQETSWDL) are enriched in polar residues. Residues 754–791 (ANTPANPVAQETSWDLQSDDGTEISEDTNIPSEPRTID) are disordered. Over residues 770–779 (QSDDGTEISE) the composition is skewed to acidic residues.

The protein belongs to the ABC transporter superfamily. ABCB family. Mitochondrial peptide exporter (TC 3.A.1.212) subfamily.

Its subcellular location is the cell membrane. In terms of biological role, pleiotropic ABC efflux transporter that may be involved in A.fumigatus adaptation to azoles. The protein is ABC multidrug transporter mdr2 of Aspergillus fumigatus (strain ATCC MYA-4609 / CBS 101355 / FGSC A1100 / Af293) (Neosartorya fumigata).